The following is a 422-amino-acid chain: UDP-N-acetylglucosamine 1-carboxyvinyltransferase (422 aa).

Residue 22-23 (KN) participates in phosphoenolpyruvate binding. Residue Arg93 participates in UDP-N-acetyl-alpha-D-glucosamine binding. Residue Cys117 is the Proton donor of the active site. 2-(S-cysteinyl)pyruvic acid O-phosphothioketal is present on Cys117. Residues 122–126 (RPVDL), Asp308, and Leu330 contribute to the UDP-N-acetyl-alpha-D-glucosamine site.

The protein belongs to the EPSP synthase family. MurA subfamily.

The protein localises to the cytoplasm. It catalyses the reaction phosphoenolpyruvate + UDP-N-acetyl-alpha-D-glucosamine = UDP-N-acetyl-3-O-(1-carboxyvinyl)-alpha-D-glucosamine + phosphate. The protein operates within cell wall biogenesis; peptidoglycan biosynthesis. Functionally, cell wall formation. Adds enolpyruvyl to UDP-N-acetylglucosamine. In Helicobacter pylori (strain P12), this protein is UDP-N-acetylglucosamine 1-carboxyvinyltransferase.